Consider the following 87-residue polypeptide: U3-theraphotoxin-Hhn1a 15 (87 aa).

Residues 1-24 form the signal peptide; that stretch reads MVNMKASMFLTFAGLVLLLVVCYA. Positions 25 to 52 are excised as a propeptide; it reads SESEEKEFPKEMLSSIFAVDNDFKQEER. Disulfide bonds link C54–C67, C61–C72, and C66–C79.

The protein belongs to the neurotoxin 10 (Hwtx-1) family. 51 (Hntx-8) subfamily. Hntx-8 sub-subfamily. As to expression, expressed by the venom gland.

The protein resides in the secreted. In terms of biological role, ion channel inhibitor. The protein is U3-theraphotoxin-Hhn1a 15 of Cyriopagopus hainanus (Chinese bird spider).